A 256-amino-acid chain; its full sequence is Thiazole synthase (256 aa).

K95 functions as the Schiff-base intermediate with DXP in the catalytic mechanism. Residues G156, A182–G183, and N204–T205 each bind 1-deoxy-D-xylulose 5-phosphate.

The protein belongs to the ThiG family. As to quaternary structure, homotetramer. Forms heterodimers with either ThiH or ThiS.

It is found in the cytoplasm. The catalysed reaction is [ThiS sulfur-carrier protein]-C-terminal-Gly-aminoethanethioate + 2-iminoacetate + 1-deoxy-D-xylulose 5-phosphate = [ThiS sulfur-carrier protein]-C-terminal Gly-Gly + 2-[(2R,5Z)-2-carboxy-4-methylthiazol-5(2H)-ylidene]ethyl phosphate + 2 H2O + H(+). It participates in cofactor biosynthesis; thiamine diphosphate biosynthesis. Catalyzes the rearrangement of 1-deoxy-D-xylulose 5-phosphate (DXP) to produce the thiazole phosphate moiety of thiamine. Sulfur is provided by the thiocarboxylate moiety of the carrier protein ThiS. In vitro, sulfur can be provided by H(2)S. In Escherichia coli O45:K1 (strain S88 / ExPEC), this protein is Thiazole synthase.